The sequence spans 305 residues: UDP-3-O-acyl-N-acetylglucosamine deacetylase (305 aa).

Zn(2+) contacts are provided by His79, His238, and Asp242. The active-site Proton donor is the His265.

It belongs to the LpxC family. Requires Zn(2+) as cofactor.

It catalyses the reaction a UDP-3-O-[(3R)-3-hydroxyacyl]-N-acetyl-alpha-D-glucosamine + H2O = a UDP-3-O-[(3R)-3-hydroxyacyl]-alpha-D-glucosamine + acetate. It participates in glycolipid biosynthesis; lipid IV(A) biosynthesis; lipid IV(A) from (3R)-3-hydroxytetradecanoyl-[acyl-carrier-protein] and UDP-N-acetyl-alpha-D-glucosamine: step 2/6. Its function is as follows. Catalyzes the hydrolysis of UDP-3-O-myristoyl-N-acetylglucosamine to form UDP-3-O-myristoylglucosamine and acetate, the committed step in lipid A biosynthesis. This chain is UDP-3-O-acyl-N-acetylglucosamine deacetylase, found in Vibrio cholerae serotype O1 (strain ATCC 39541 / Classical Ogawa 395 / O395).